A 293-amino-acid polypeptide reads, in one-letter code: MSGFGGRGVDEKGFLRWLLGELGVEEDDVAYVDGLVVKVDGAAASTSRLPFQTWADFGWRNVAAAYSDVRVKFAEARLLLASVTAPDLGTAAEVVQGVREASQFFSLAYVGGDLNEGRDVVVDVVLVGWARARVGRAPRPGDVLVTIPQFGYTSLAYRFWQMGGAVVERGVEALKRPKPLWPLPPAECVTAAMDSSDGLGDVLWSMARGVDIVVKELPAPREVLEFAAERGLDVGEIVFNGGEEFLPVFAVRRDCPVESPYVSFAEVVPGEGRVWWRGEELKWRGWAYFRGWG.

Glu25, Val39, Asp40, Asp68, and Asp113 together coordinate Mg(2+). ATP is bound by residues 112–113 and Arg136; that span reads GD. Residue Asp194 participates in Mg(2+) binding. Residue Ser196 participates in ATP binding. Asp197 is a binding site for Mg(2+). Substrate is bound by residues Glu243 and Trp286.

It belongs to the thiamine-monophosphate kinase family. As to quaternary structure, homodimer.

The catalysed reaction is thiamine phosphate + ATP = thiamine diphosphate + ADP. The protein operates within cofactor biosynthesis; thiamine diphosphate biosynthesis; thiamine diphosphate from thiamine phosphate: step 1/1. Is inhibited by AMP; the mode of AMP inhibition is uncompetitive for both TMP and ATP. Catalyzes the ATP-dependent phosphorylation of thiamine-monophosphate (TMP) to form thiamine-pyrophosphate (TPP), the active form of vitamin B1. This Pyrobaculum calidifontis (strain DSM 21063 / JCM 11548 / VA1) protein is Thiamine-monophosphate kinase.